Here is a 554-residue protein sequence, read N- to C-terminus: Bifunctional epoxide hydrolase 2 (554 aa).

The phosphatase stretch occupies residues 1 to 224 (MALRVAAFDL…KVTGTQFPEA (224 aa)). Residues aspartate 9 and aspartate 11 each contribute to the Mg(2+) site. Lysine 55 bears the N6-succinyllysine mark. Residue 123 to 124 (TN) coordinates phosphate. Lysine 176 carries the post-translational modification N6-acetyllysine; alternate. Lysine 176 is subject to N6-succinyllysine; alternate. Aspartate 185 lines the Mg(2+) pocket. N6-acetyllysine is present on residues lysine 191 and lysine 215. The tract at residues 233 to 554 (NDVSHGYVTV…IQNPSVTSKI (322 aa)) is epoxide hydrolase. The AB hydrolase-1 domain maps to 257 to 530 (PAICLCHGFP…CGHWTQIEKP (274 aa)). The active-site Nucleophile is the aspartate 333. The residue at position 368 (serine 368) is a Phosphoserine. A substrate-binding site is contributed by tyrosine 381. 2 positions are modified to N6-succinyllysine: lysine 420 and lysine 454. Tyrosine 465 acts as the Proton donor in catalysis. Lysine 504 bears the N6-succinyllysine mark. Cysteine 521 carries the S-(15-deoxy-Delta12,14-prostaglandin J2-9-yl)cysteine lipid modification. The Proton acceptor role is filled by histidine 523. Positions 552–554 (SKI) match the Microbody targeting signal motif. Lysine 553 carries the post-translational modification N6-succinyllysine.

Belongs to the AB hydrolase superfamily. Epoxide hydrolase family. Homodimer. The cofactor is Mg(2+). The covalent modification of cysteine by 15-deoxy-Delta12,14-prostaglandin-J2 is autocatalytic and reversible. It may occur as an alternative to other cysteine modifications, such as S-nitrosylation and S-palmitoylation.

It is found in the cytoplasm. The protein resides in the peroxisome. The catalysed reaction is an epoxide + H2O = an ethanediol. The enzyme catalyses (9S,10S)-10-hydroxy-9-(phosphooxy)octadecanoate + H2O = (9S,10S)-9,10-dihydroxyoctadecanoate + phosphate. It catalyses the reaction 8-hydroxy-(11S,12S)-epoxy-(5Z,9E,14Z)-eicosatrienoate + H2O = (8,11R,12S)-trihydroxy-(5Z,9E,14Z)-eicosatrienoate. It carries out the reaction 10-hydroxy-(11S,12S)-epoxy- (5Z,8Z,14Z)-eicosatrienoate + H2O = (10,11S,12R)-trihydroxy-(5Z,8Z,14Z)-eicosatrienoate. The catalysed reaction is 12-phosphooxy-(9Z)-octadecenoate + H2O = 12-hydroxy-(9Z)-octadecenoate + phosphate. The enzyme catalyses 12-phosphooxy-(9E)-octadecenoate + H2O = 12-hydroxy-(9E)-octadecenoate + phosphate. It catalyses the reaction 12-(phosphooxy)octadecanoate + H2O = 12-hydroxyoctadecanoate + phosphate. It carries out the reaction 8,9-epoxy-(5Z,11Z,14Z)-eicosatrienoate + H2O = 8,9-dihydroxy-(5Z,11Z,14Z)-eicosatrienoate. The catalysed reaction is 11,12-epoxy-(5Z,8Z,14Z)-eicosatrienoate + H2O = 11,12-dihydroxy-(5Z,8Z,14Z)-eicosatrienoate. The enzyme catalyses 14,15-epoxy-(5Z,8Z,11Z)-eicosatrienoate + H2O = 14,15-dihydroxy-(5Z,8Z,11Z)-eicosatrienoate. It catalyses the reaction 9,10-epoxy-(12Z)-octadecenoate + H2O = 9,10-dihydroxy-(12Z)-octadecenoate. It carries out the reaction 1-tetradecanoyl-sn-glycerol 3-phosphate + H2O = 1-tetradecanoyl-sn-glycerol + phosphate. The catalysed reaction is 1-octadecanoyl-sn-glycero-3-phosphate + H2O = 1-octadecanoyl-sn-glycerol + phosphate. The enzyme catalyses 1-(5Z,8Z,11Z,14Z-eicosatetraenoyl)-sn-glycero-3-phosphate + H2O = 1-(5Z,8Z,11Z,14Z-eicosatetraenoyl)-sn-glycerol + phosphate. It catalyses the reaction 1-hexadecanoyl-sn-glycero-3-phosphate + H2O = 1-hexadecanoyl-sn-glycerol + phosphate. It carries out the reaction 1-(9Z-octadecenoyl)-sn-glycero-3-phosphate + H2O = 1-(9Z-octadecenoyl)-sn-glycerol + phosphate. The catalysed reaction is (8S,9R)-epoxy-(5Z,11Z,14Z)-eicosatrienoate + H2O = (8S,9S)-dihydroxy-(5Z,11Z,14Z)-eicosatrienoate. The enzyme catalyses (11S,12R)-epoxy-(5Z,8Z,14Z)-eicosatrienoate + H2O = (11R,12R)-dihydroxy-(5Z,8Z,14Z)-eicosatrienoate. It catalyses the reaction (11S,12R)-epoxy-(5Z,8Z,14Z)-eicosatrienoate + H2O = (11S,12S)-dihydroxy-(5Z,8Z,14Z)-eicosatrienoate. It carries out the reaction (14S,15R)-epoxy-(5Z,8Z,11Z)-eicosatrienoate + H2O = (14R,15R)-dihydroxy-(5Z,8Z,11Z)-eicosatrienoate. The catalysed reaction is (14S,15R)-epoxy-(5Z,8Z,11Z)-eicosatrienoate + H2O = (14S,15S)-dihydroxy-(5Z,8Z,11Z)-eicosatrienoate. The enzyme catalyses (11R,12S)-epoxy-(5Z,8Z,14Z)-eicosatrienoate + H2O = (11S,12S)-dihydroxy-(5Z,8Z,14Z)-eicosatrienoate. It catalyses the reaction (11R,12S)-epoxy-(5Z,8Z,14Z)-eicosatrienoate + H2O = (11R,12R)-dihydroxy-(5Z,8Z,14Z)-eicosatrienoate. It carries out the reaction (8S,9R)-epoxy-(5Z,11Z,14Z)-eicosatrienoate + H2O = (8R,9R)-dihydroxy-(5Z,11Z,14Z)-eicosatrienoate. The catalysed reaction is (14R,15S)-epoxy-(5Z,8Z,11Z)-eicosatrienoate + H2O = (14R,15R)-dihydroxy-(5Z,8Z,11Z)-eicosatrienoate. With respect to regulation, inhibited by 1-(1-acetylpiperidin-4-yl)-3-(4-(trifl uoromethoxy)phenyl)urea (TPAU), 1-cyclohexyl-3-dodecylurea (CDU), 12-(3-adamantan-1-yl-ureido)-dodecanoic acid (AUDA), 1-((3S, 5S, 7S)-adamantan-1-yl)-3-(5-(2-(2-ethoxyethoxy) ethoxy)pentyl)urea (AEPU), N-adamantyl-N[']-cyclohexyl urea (ACU), 4-(((1S, 4S)-4-(3-((3S, 5S, 7S)-adamantan-1-yl) ureido)cyclohexyl)oxy)benzoic acid (c-AUCB), 4-(((1R, 4R)-4-(3-((3S, 5S, 7S)-adamantan-1-yl)ureido)cyclohexyl)oxy)benzoic acid (t-AUCB), 4-(((1R, 4R)-4-(3-(4(trifluoromethoxy)phenyl)ureido)cyclohexyl)oxy)benzoic acid (t-TAUCB) and to a lesser extent by 8-(3-((3S, 5S, 7S)-adamantan-1-yl)ureido) octanoic acid (AUOA). Phosphatase activity is inhibited by dodecyl-phosphate, phospholipids such as phospho-lysophosphatidic acids and fatty acids such as palmitic acid and lauric acid. Its function is as follows. Bifunctional enzyme. The C-terminal domain has epoxide hydrolase activity and acts on epoxides (alkene oxides, oxiranes) and arene oxides. Plays a role in xenobiotic metabolism by degrading potentially toxic epoxides. Also determines steady-state levels of physiological mediators. The N-terminal domain has lipid phosphatase activity, with the highest activity towards threo-9,10-phosphonooxy-hydroxy-octadecanoic acid, followed by erythro-9,10-phosphonooxy-hydroxy-octadecanoic acid, 12-phosphonooxy-octadec-9Z-enoic acid and 12-phosphonooxy-octadec-9E-enoic acid. Bifunctional enzyme. The C-terminal domain has epoxide hydrolase activity and acts on epoxides (alkene oxides, oxiranes) and arene oxides. Plays a role in xenobiotic metabolism by degrading potentially toxic epoxides. Also determines steady-state levels of physiological mediators. Functionally, bifunctional enzyme. The N-terminal domain has lipid phosphatase activity, with the highest activity towards threo-9,10-phosphonooxy-hydroxy-octadecanoic acid, followed by erythro-9,10-phosphonooxy-hydroxy-octadecanoic acid, 12-phosphonooxy-octadec-9Z-enoic acid and 12-phosphonooxy-octadec-9E-enoic acid. Has phosphatase activity toward lyso-glycerophospholipids with also some lower activity toward lysolipids of sphingolipid and isoprenoid phosphates. This is Bifunctional epoxide hydrolase 2 from Rattus norvegicus (Rat).